Here is a 92-residue protein sequence, read N- to C-terminus: Signal recognition particle 19 kDa protein (92 aa).

It belongs to the SRP19 family. Part of the signal recognition particle protein translocation system, which is composed of SRP and FtsY. Archaeal SRP consists of a 7S RNA molecule of 300 nucleotides and two protein subunits: SRP54 and SRP19.

Its subcellular location is the cytoplasm. Involved in targeting and insertion of nascent membrane proteins into the cytoplasmic membrane. Binds directly to 7S RNA and mediates binding of the 54 kDa subunit of the SRP. This is Signal recognition particle 19 kDa protein from Haloarcula marismortui (strain ATCC 43049 / DSM 3752 / JCM 8966 / VKM B-1809) (Halobacterium marismortui).